The sequence spans 303 residues: Endo-1,3;1,4-beta-D-glucanase (303 aa).

The first 43 residues, 1–43 (MPSSAQVLLCLAAVLAAAAATTAEAHSQCLDNPPDRSIHGRQL), serve as a signal peptide directing secretion. N-linked (GlcNAc...) asparagine glycans are attached at residues Asn115, Asn197, and Asn257.

Glycosylated.

The protein resides in the secreted. Its function is as follows. Plays a role in control of plant growth. Mediates specific degradation of cell wall (1,3)(1,4)-beta-D-glucans and is related to auxin-mediated growth and development of cereal coleoptiles. The chain is Endo-1,3;1,4-beta-D-glucanase from Zea mays (Maize).